Reading from the N-terminus, the 76-residue chain is DNA-directed RNA polymerase subunit Rpo5 (76 aa).

Belongs to the archaeal Rpo5/eukaryotic RPB5 RNA polymerase subunit family. In terms of assembly, part of the RNA polymerase complex.

It is found in the cytoplasm. It catalyses the reaction RNA(n) + a ribonucleoside 5'-triphosphate = RNA(n+1) + diphosphate. DNA-dependent RNA polymerase (RNAP) catalyzes the transcription of DNA into RNA using the four ribonucleoside triphosphates as substrates. This Archaeoglobus fulgidus (strain ATCC 49558 / DSM 4304 / JCM 9628 / NBRC 100126 / VC-16) protein is DNA-directed RNA polymerase subunit Rpo5.